Reading from the N-terminus, the 196-residue chain is Holliday junction branch migration complex subunit RuvA (196 aa).

The segment at 1–63 (MINKIYGKIV…DDDVKLFGFL (63 aa)) is domain I. The segment at 64–142 (NISEREVFED…KGDESSSYML (79 aa)) is domain II. Residue Lys143 is a region of interest, flexible linker. The domain III stretch occupies residues 143–196 (KFKELEQSIVNMGFDRKLVVVAFREIMLSDKFLILKEAEQEQFLFTETLKRLSV).

Belongs to the RuvA family. As to quaternary structure, homotetramer. Forms an RuvA(8)-RuvB(12)-Holliday junction (HJ) complex. HJ DNA is sandwiched between 2 RuvA tetramers; dsDNA enters through RuvA and exits via RuvB. An RuvB hexamer assembles on each DNA strand where it exits the tetramer. Each RuvB hexamer is contacted by two RuvA subunits (via domain III) on 2 adjacent RuvB subunits; this complex drives branch migration. In the full resolvosome a probable DNA-RuvA(4)-RuvB(12)-RuvC(2) complex forms which resolves the HJ.

Its subcellular location is the cytoplasm. Functionally, the RuvA-RuvB-RuvC complex processes Holliday junction (HJ) DNA during genetic recombination and DNA repair, while the RuvA-RuvB complex plays an important role in the rescue of blocked DNA replication forks via replication fork reversal (RFR). RuvA specifically binds to HJ cruciform DNA, conferring on it an open structure. The RuvB hexamer acts as an ATP-dependent pump, pulling dsDNA into and through the RuvAB complex. HJ branch migration allows RuvC to scan DNA until it finds its consensus sequence, where it cleaves and resolves the cruciform DNA. The chain is Holliday junction branch migration complex subunit RuvA from Borrelia duttonii (strain Ly).